The sequence spans 126 residues: Holo-[acyl-carrier-protein] synthase (126 aa).

Mg(2+) is bound by residues D8 and E60.

Belongs to the P-Pant transferase superfamily. AcpS family. It depends on Mg(2+) as a cofactor.

The protein resides in the cytoplasm. The catalysed reaction is apo-[ACP] + CoA = holo-[ACP] + adenosine 3',5'-bisphosphate + H(+). In terms of biological role, transfers the 4'-phosphopantetheine moiety from coenzyme A to a Ser of acyl-carrier-protein. This chain is Holo-[acyl-carrier-protein] synthase, found in Ehrlichia canis (strain Jake).